The primary structure comprises 286 residues: Pantothenate synthetase (286 aa).

30 to 37 contributes to the ATP binding site; the sequence is MGFLHEGH. Histidine 37 acts as the Proton donor in catalysis. A (R)-pantoate-binding site is contributed by glutamine 61. Position 61 (glutamine 61) interacts with beta-alanine. 147 to 150 contributes to the ATP binding site; the sequence is GLKD. Glutamine 153 is a binding site for (R)-pantoate. Residues valine 176 and 184–187 contribute to the ATP site; that span reads KSSR.

The protein belongs to the pantothenate synthetase family. In terms of assembly, homodimer.

It is found in the cytoplasm. It catalyses the reaction (R)-pantoate + beta-alanine + ATP = (R)-pantothenate + AMP + diphosphate + H(+). It participates in cofactor biosynthesis; (R)-pantothenate biosynthesis; (R)-pantothenate from (R)-pantoate and beta-alanine: step 1/1. Catalyzes the condensation of pantoate with beta-alanine in an ATP-dependent reaction via a pantoyl-adenylate intermediate. In Bacillus velezensis (strain DSM 23117 / BGSC 10A6 / LMG 26770 / FZB42) (Bacillus amyloliquefaciens subsp. plantarum), this protein is Pantothenate synthetase.